The following is a 512-amino-acid chain: 2-isopropylmalate synthase (512 aa).

Residues 5–267 enclose the Pyruvate carboxyltransferase domain; it reads LYIFDTTLRD…DSRVDATQIV (263 aa). Residues Asp-14, His-202, His-204, and Asn-238 each contribute to the Mn(2+) site. The interval 393 to 512 is regulatory domain; it reads KLVSLKVVSE…EEKMNAQAAA (120 aa).

The protein belongs to the alpha-IPM synthase/homocitrate synthase family. LeuA type 1 subfamily. In terms of assembly, homodimer. Mn(2+) serves as cofactor.

It localises to the cytoplasm. It catalyses the reaction 3-methyl-2-oxobutanoate + acetyl-CoA + H2O = (2S)-2-isopropylmalate + CoA + H(+). It functions in the pathway amino-acid biosynthesis; L-leucine biosynthesis; L-leucine from 3-methyl-2-oxobutanoate: step 1/4. Catalyzes the condensation of the acetyl group of acetyl-CoA with 3-methyl-2-oxobutanoate (2-ketoisovalerate) to form 3-carboxy-3-hydroxy-4-methylpentanoate (2-isopropylmalate). The chain is 2-isopropylmalate synthase from Chromobacterium violaceum (strain ATCC 12472 / DSM 30191 / JCM 1249 / CCUG 213 / NBRC 12614 / NCIMB 9131 / NCTC 9757 / MK).